The chain runs to 489 residues: Probable 26S proteasome non-ATPase regulatory subunit 3 (489 aa).

The interval 1 to 23 is disordered; that stretch reads MTQDVEMKEVPAPAPSNSVTAAT. A PCI domain is found at 241 to 422; it reads CRYLFYLGKI…GWMVSKETGD (182 aa). The tract at residues 454-489 is disordered; sequence PANSHKDKESAEKRRERQQQEQELAKHIAEEDDDEF. Residues 457 to 482 show a composition bias toward basic and acidic residues; the sequence is SHKDKESAEKRRERQQQEQELAKHIA.

It belongs to the proteasome subunit S3 family. The 26S proteasome is composed of a core protease, known as the 20S proteasome, capped at one or both ends by the 19S regulatory complex (RC). The RC is composed of at least 18 different subunits in two subcomplexes, the base and the lid, which form the portions proximal and distal to the 20S proteolytic core, respectively.

The protein resides in the nucleus. Its function is as follows. Acts as a regulatory subunit of the 26 proteasome which is involved in the ATP-dependent degradation of ubiquitinated proteins. The chain is Probable 26S proteasome non-ATPase regulatory subunit 3 (21D7) from Daucus carota (Wild carrot).